The primary structure comprises 224 residues: Small ribosomal subunit protein uS5 (224 aa).

Residues 1-38 (MAEQSAGGQGAPEGRDSRDSREGRGRRDGGRGGRDSDK) form a disordered region. Over residues 13–38 (EGRDSRDSREGRGRRDGGRGGRDSDK) the composition is skewed to basic and acidic residues. Residues 41–104 (YLERVVAINR…EEARKGFFRV (64 aa)) form the S5 DRBM domain.

This sequence belongs to the universal ribosomal protein uS5 family. As to quaternary structure, part of the 30S ribosomal subunit. Contacts proteins S4 and S8.

Functionally, with S4 and S12 plays an important role in translational accuracy. In terms of biological role, located at the back of the 30S subunit body where it stabilizes the conformation of the head with respect to the body. In Mycobacterium ulcerans (strain Agy99), this protein is Small ribosomal subunit protein uS5.